The primary structure comprises 663 residues: Translation factor GUF1 homolog, mitochondrial (663 aa).

Positions 64 to 250 constitute a tr-type G domain; sequence EKIRNFSIIA…AVIERIPPPP (187 aa). GTP is bound by residues 73-80, 143-147, and 197-200; these read AHIDHGKS, DTPGH, and NKID.

This sequence belongs to the TRAFAC class translation factor GTPase superfamily. Classic translation factor GTPase family. LepA subfamily.

Its subcellular location is the mitochondrion inner membrane. It carries out the reaction GTP + H2O = GDP + phosphate + H(+). Functionally, promotes mitochondrial protein synthesis. May act as a fidelity factor of the translation reaction, by catalyzing a one-codon backward translocation of tRNAs on improperly translocated ribosomes. Binds to mitochondrial ribosomes in a GTP-dependent manner. The sequence is that of Translation factor GUF1 homolog, mitochondrial from Arabidopsis thaliana (Mouse-ear cress).